The primary structure comprises 120 residues: Peptidyl-tRNA hydrolase (120 aa).

It belongs to the PTH2 family. In terms of assembly, homodimer.

The protein localises to the cytoplasm. The enzyme catalyses an N-acyl-L-alpha-aminoacyl-tRNA + H2O = an N-acyl-L-amino acid + a tRNA + H(+). Its function is as follows. The natural substrate for this enzyme may be peptidyl-tRNAs which drop off the ribosome during protein synthesis. The chain is Peptidyl-tRNA hydrolase from Saccharolobus solfataricus (strain ATCC 35092 / DSM 1617 / JCM 11322 / P2) (Sulfolobus solfataricus).